Here is a 552-residue protein sequence, read N- to C-terminus: 2,3-bisphosphoglycerate-independent phosphoglycerate mutase (552 aa).

The segment covering 1–25 (MTNTQQQSESIDDNQAQLSKQQNSD) has biased composition (polar residues). Positions 1-30 (MTNTQQQSESIDDNQAQLSKQQNSDNNKKV) are disordered. Residues aspartate 38 and serine 88 each coordinate Mn(2+). Serine 88 acts as the Phosphoserine intermediate in catalysis. Residues histidine 149, 179 to 180 (RD), arginine 217, arginine 223, 293 to 296 (RADR), and lysine 373 contribute to the substrate site. 5 residues coordinate Mn(2+): aspartate 440, histidine 444, aspartate 481, histidine 482, and histidine 500.

Belongs to the BPG-independent phosphoglycerate mutase family. In terms of assembly, monomer. It depends on Mn(2+) as a cofactor.

The catalysed reaction is (2R)-2-phosphoglycerate = (2R)-3-phosphoglycerate. It functions in the pathway carbohydrate degradation; glycolysis; pyruvate from D-glyceraldehyde 3-phosphate: step 3/5. In terms of biological role, catalyzes the interconversion of 2-phosphoglycerate and 3-phosphoglycerate. In Psychrobacter arcticus (strain DSM 17307 / VKM B-2377 / 273-4), this protein is 2,3-bisphosphoglycerate-independent phosphoglycerate mutase.